An 83-amino-acid chain; its full sequence is Cell division topological specificity factor (83 aa).

The protein belongs to the MinE family.

Prevents the cell division inhibition by proteins MinC and MinD at internal division sites while permitting inhibition at polar sites. This ensures cell division at the proper site by restricting the formation of a division septum at the midpoint of the long axis of the cell. The chain is Cell division topological specificity factor from Marinobacter nauticus (strain ATCC 700491 / DSM 11845 / VT8) (Marinobacter aquaeolei).